Consider the following 333-residue polypeptide: Fructose-1,6-bisphosphatase class 1 (333 aa).

The Mg(2+) site is built by glutamate 90, aspartate 113, leucine 115, and aspartate 116. Residues 116–119 (DGSS), asparagine 209, tyrosine 242, and lysine 272 each bind substrate. Glutamate 278 provides a ligand contact to Mg(2+).

This sequence belongs to the FBPase class 1 family. As to quaternary structure, homotetramer. Mg(2+) serves as cofactor.

The protein resides in the cytoplasm. The enzyme catalyses beta-D-fructose 1,6-bisphosphate + H2O = beta-D-fructose 6-phosphate + phosphate. Its pathway is carbohydrate biosynthesis; gluconeogenesis. This Pasteurella multocida (strain Pm70) protein is Fructose-1,6-bisphosphatase class 1.